A 179-amino-acid polypeptide reads, in one-letter code: Pyridoxal 5'-phosphate synthase subunit PdxT (179 aa).

L-glutamine is bound at residue 48–50 (GES). The active-site Nucleophile is Cys-79. L-glutamine is bound by residues Arg-101 and 127–128 (IR). Active-site charge relay system residues include His-163 and Glu-165.

It belongs to the glutaminase PdxT/SNO family. As to quaternary structure, in the presence of PdxS, forms a dodecamer of heterodimers. Only shows activity in the heterodimer.

The enzyme catalyses aldehydo-D-ribose 5-phosphate + D-glyceraldehyde 3-phosphate + L-glutamine = pyridoxal 5'-phosphate + L-glutamate + phosphate + 3 H2O + H(+). It catalyses the reaction L-glutamine + H2O = L-glutamate + NH4(+). The protein operates within cofactor biosynthesis; pyridoxal 5'-phosphate biosynthesis. Its function is as follows. Catalyzes the hydrolysis of glutamine to glutamate and ammonia as part of the biosynthesis of pyridoxal 5'-phosphate. The resulting ammonia molecule is channeled to the active site of PdxS. In Francisella philomiragia subsp. philomiragia (strain ATCC 25017 / CCUG 19701 / FSC 153 / O#319-036), this protein is Pyridoxal 5'-phosphate synthase subunit PdxT.